We begin with the raw amino-acid sequence, 338 residues long: Ketol-acid reductoisomerase (NADP(+)) (338 aa).

The 181-residue stretch at 1-181 (MQVYYDKDCD…GGGRTGIIET (181 aa)) folds into the KARI N-terminal Rossmann domain. NADP(+)-binding positions include 24 to 27 (FGSQ), arginine 47, serine 50, serine 52, and 82 to 85 (DEFQ). Histidine 107 is an active-site residue. Glycine 133 is a binding site for NADP(+). Residues 182 to 327 (TFRDECETDL…RKLRAMMPWI (146 aa)) enclose the KARI C-terminal knotted domain. Mg(2+) is bound by residues aspartate 190, glutamate 194, glutamate 226, and glutamate 230. Serine 251 lines the substrate pocket.

It belongs to the ketol-acid reductoisomerase family. The cofactor is Mg(2+).

The catalysed reaction is (2R)-2,3-dihydroxy-3-methylbutanoate + NADP(+) = (2S)-2-acetolactate + NADPH + H(+). The enzyme catalyses (2R,3R)-2,3-dihydroxy-3-methylpentanoate + NADP(+) = (S)-2-ethyl-2-hydroxy-3-oxobutanoate + NADPH + H(+). The protein operates within amino-acid biosynthesis; L-isoleucine biosynthesis; L-isoleucine from 2-oxobutanoate: step 2/4. Its pathway is amino-acid biosynthesis; L-valine biosynthesis; L-valine from pyruvate: step 2/4. Involved in the biosynthesis of branched-chain amino acids (BCAA). Catalyzes an alkyl-migration followed by a ketol-acid reduction of (S)-2-acetolactate (S2AL) to yield (R)-2,3-dihydroxy-isovalerate. In the isomerase reaction, S2AL is rearranged via a Mg-dependent methyl migration to produce 3-hydroxy-3-methyl-2-ketobutyrate (HMKB). In the reductase reaction, this 2-ketoacid undergoes a metal-dependent reduction by NADPH to yield (R)-2,3-dihydroxy-isovalerate. The sequence is that of Ketol-acid reductoisomerase (NADP(+)) from Hydrogenovibrio crunogenus (strain DSM 25203 / XCL-2) (Thiomicrospira crunogena).